A 93-amino-acid chain; its full sequence is Small ribosomal subunit protein uS19c (93 aa).

The protein belongs to the universal ribosomal protein uS19 family.

It localises to the plastid. Its subcellular location is the chloroplast. Functionally, protein S19 forms a complex with S13 that binds strongly to the 16S ribosomal RNA. The chain is Small ribosomal subunit protein uS19c from Ipomoea purpurea (Common morning glory).